The following is a 149-amino-acid chain: MTESDTKITLIGSRLAREGLEFIFKGEMPECKKCRLKNTCLNLEPGRRYRVERIRSKDIHECFLHDSGVLAVDVSRAPILTTLESRKAVEGAKIMYEPAKCGKRECSVYEVCHPEGLLKGDKCKIVEVLESLDSKCEAGNSLKKVKLAW.

It belongs to the UPF0179 family.

In Methanosarcina acetivorans (strain ATCC 35395 / DSM 2834 / JCM 12185 / C2A), this protein is UPF0179 protein MA_3685.